A 143-amino-acid chain; its full sequence is Peptide methionine sulfoxide reductase MsrB (143 aa).

Residues 5–126 (KEEKIKSLNR…NSAALRFVPK (122 aa)) form the MsrB domain. Residue cysteine 115 is the Nucleophile of the active site.

This sequence belongs to the MsrB Met sulfoxide reductase family.

The catalysed reaction is L-methionyl-[protein] + [thioredoxin]-disulfide + H2O = L-methionyl-(R)-S-oxide-[protein] + [thioredoxin]-dithiol. The sequence is that of Peptide methionine sulfoxide reductase MsrB from Bacillus subtilis (strain 168).